Here is a 453-residue protein sequence, read N- to C-terminus: Plasmepsin II (453 aa).

The Cytoplasmic portion of the chain corresponds to 1 to 37; that stretch reads MDITVREHDFKHGFIKSNSTFDGLNIDNSKNKKKIQK. Residues 1–124 constitute a propeptide that is removed on maturation; sequence MDITVREHDF…SGLTKTNYLG (124 aa). The chain crosses the membrane as a helical; Signal-anchor for type II membrane protein span at residues 38–58; it reads GFQILYVLLFCSVMCGLFYYV. At 59 to 453 the chain is on the lumenal side; it reads YENVWLQRDN…VGIALAKKNL (395 aa). A Peptidase A1 domain is found at 140–447; the sequence is FYGDAEVGDN…DYDNHSVGIA (308 aa). The active site involves Asp-158. A disulfide bond links Cys-171 and Cys-176. Asp-338 is an active-site residue. Cys-373 and Cys-409 are joined by a disulfide.

The protein belongs to the peptidase A1 family. As to quaternary structure, component of the hemozoin formation complex (HFC) composed of falcipains FP2A and/or FP2B, plasmepsins PMII, PMIII/HAP and PMIV, heme detoxifying protein HDP and falcilysin FLN. The HFC complex is involved in hemoglobin degradation and detoxification of heme in the food vacuole during the asexual blood stage. Post-translationally, not N-glycosylated. Proteolytically cleaved into the soluble active mature form in the digestive vacuole by cysteine protease falcipains; the process begins at the early ring stage. Proteolysis requires an acidic environment. In absence of falcipains, autoprocessing may serve as an alternate activation system.

Its subcellular location is the membrane. The protein resides in the vacuole lumen. It is found in the vacuole membrane. It carries out the reaction Hydrolysis of the bonds linking certain hydrophobic residues in hemoglobin or globin. Also cleaves small molecules substrates such as Ala-Leu-Glu-Arg-Thr-Phe-|-Phe(NO2)-Ser-Phe-Pro-Thr.. Inhibited by pepstatin A. Functionally, during the asexual blood stage, participates in initial cleavage of native host hemoglobin (Hb) resulting in Hb denaturation. May cleave preferentially denatured hemoglobin that has been cleaved by PMI. Digestion of host Hb is an essential step which provides the parasite with amino acids for protein synthesis, and regulates osmolarity. This Plasmodium falciparum (isolate HB3) protein is Plasmepsin II.